The sequence spans 185 residues: Ribosome-recycling factor (185 aa).

The protein belongs to the RRF family.

The protein localises to the cytoplasm. In terms of biological role, responsible for the release of ribosomes from messenger RNA at the termination of protein biosynthesis. May increase the efficiency of translation by recycling ribosomes from one round of translation to another. This is Ribosome-recycling factor from Dehalococcoides mccartyi (strain ATCC BAA-2266 / KCTC 15142 / 195) (Dehalococcoides ethenogenes (strain 195)).